We begin with the raw amino-acid sequence, 955 residues long: Auxin response factor 11 (955 aa).

Residues 143-245 (FCKNLTASDT…QLLLGVRRAT (103 aa)) constitute a DNA-binding region (TF-B3). Residues 518–543 (ESKLNATSRDPRNTDSYTSRSTSEQN) are compositionally biased toward polar residues. Disordered stretches follow at residues 518 to 573 (ESKL…LSSA) and 609 to 646 (TQGN…KSVN). Positions 551-560 (KTRRSKKGLP) are enriched in basic residues. Positions 852–936 (RTYTKVQKQG…RCIRILSPSE (85 aa)) constitute a PB1 domain.

The protein belongs to the ARF family. In terms of assembly, homodimers and heterodimers.

It localises to the nucleus. Auxin response factors (ARFs) are transcriptional factors that bind specifically to the DNA sequence 5'-TGTCTC-3' found in the auxin-responsive promoter elements (AuxREs). This is Auxin response factor 11 (ARF11) from Oryza sativa subsp. indica (Rice).